Here is a 174-residue protein sequence, read N- to C-terminus: Elongation factor Tu, mitochondrial (174 aa).

Asp-62–His-66 provides a ligand contact to GTP. At Lys-78 the chain carries N6-succinyllysine. Position 103 is a phosphothreonine (Thr-103). At Ser-121 the chain carries Phosphoserine. At Lys-161 the chain carries N6-acetyllysine.

Belongs to the GTP-binding elongation factor family. EF-Tu/EF-1A subfamily.

It localises to the mitochondrion. The catalysed reaction is GTP + H2O = GDP + phosphate + H(+). Its function is as follows. GTP hydrolase that promotes the GTP-dependent binding of aminoacyl-tRNA to the A-site of ribosomes during protein biosynthesis. This chain is Elongation factor Tu, mitochondrial, found in Mesocricetus auratus (Golden hamster).